Consider the following 1058-residue polypeptide: Ubiquitin-like modifier-activating enzyme 1 Y (1058 aa).

The disordered stretch occupies residues 1–22 (MSSSVLSKKRKVSGPDSSLDSS). ATP-binding positions include Ala-477, Asp-503, Arg-514, Lys-527, and 575-576 (DN). Cys-631 serves as the catalytic Glycyl thioester intermediate.

This sequence belongs to the ubiquitin-activating E1 family. As to quaternary structure, monomer. In terms of tissue distribution, expressed in testis in A spermatogonia and spermatids but not (or at very low levels) in pachytene spermatocytes. Also expressed in Y-bearing ovaries and at very low levels in adrenal gland.

The catalysed reaction is ATP + ubiquitin + [E1 ubiquitin-activating enzyme]-L-cysteine = AMP + diphosphate + S-ubiquitinyl-[E1 ubiquitin-activating enzyme]-L-cysteine.. Its pathway is protein modification; protein ubiquitination. Its function is as follows. Activates ubiquitin by first adenylating its C-terminal glycine residue with ATP, and thereafter linking this residue to the side chain of a cysteine residue in E1, yielding a ubiquitin-E1 thioester and free AMP. The Y chromosome form could be involved in the survival and proliferation of differentiating spermatogonia. This Mus musculus (Mouse) protein is Ubiquitin-like modifier-activating enzyme 1 Y (Uba1y).